The chain runs to 484 residues: tRNA-2-methylthio-N(6)-dimethylallyladenosine synthase (484 aa).

The MTTase N-terminal domain occupies 29 to 149 (GVFHIHTLGC…LPKLLDQNRA (121 aa)). 6 residues coordinate [4Fe-4S] cluster: C38, C78, C112, C186, C190, and C193. One can recognise a Radical SAM core domain in the interval 172 to 401 (RASRISSWVA…VALQEQITEE (230 aa)). A TRAM domain is found at 404 to 474 (ATFEGRDVEV…RHNLLADPDV (71 aa)).

It belongs to the methylthiotransferase family. MiaB subfamily. Monomer. It depends on [4Fe-4S] cluster as a cofactor.

The protein localises to the cytoplasm. The enzyme catalyses N(6)-dimethylallyladenosine(37) in tRNA + (sulfur carrier)-SH + AH2 + 2 S-adenosyl-L-methionine = 2-methylsulfanyl-N(6)-dimethylallyladenosine(37) in tRNA + (sulfur carrier)-H + 5'-deoxyadenosine + L-methionine + A + S-adenosyl-L-homocysteine + 2 H(+). In terms of biological role, catalyzes the methylthiolation of N6-(dimethylallyl)adenosine (i(6)A), leading to the formation of 2-methylthio-N6-(dimethylallyl)adenosine (ms(2)i(6)A) at position 37 in tRNAs that read codons beginning with uridine. This chain is tRNA-2-methylthio-N(6)-dimethylallyladenosine synthase, found in Bifidobacterium longum subsp. infantis (strain ATCC 15697 / DSM 20088 / JCM 1222 / NCTC 11817 / S12).